Here is a 502-residue protein sequence, read N- to C-terminus: ATP synthase subunit beta, chloroplastic (502 aa).

S17 bears the Phosphoserine mark. 176-183 contributes to the ATP binding site; the sequence is GGAGVGKT.

This sequence belongs to the ATPase alpha/beta chains family. In terms of assembly, F-type ATPases have 2 components, CF(1) - the catalytic core - and CF(0) - the membrane proton channel. CF(1) has five subunits: alpha(3), beta(3), gamma(1), delta(1), epsilon(1). CF(0) has four main subunits: a(1), b(1), b'(1) and c(9-12).

The protein resides in the plastid. It is found in the chloroplast thylakoid membrane. It carries out the reaction ATP + H2O + 4 H(+)(in) = ADP + phosphate + 5 H(+)(out). Produces ATP from ADP in the presence of a proton gradient across the membrane. The catalytic sites are hosted primarily by the beta subunits. The polypeptide is ATP synthase subunit beta, chloroplastic (Lepidium virginicum (Virginia pepperweed)).